We begin with the raw amino-acid sequence, 160 residues long: Ureidoglycolate lyase (160 aa).

This sequence belongs to the ureidoglycolate lyase family. In terms of assembly, homodimer. Ni(2+) serves as cofactor.

It carries out the reaction (S)-ureidoglycolate = urea + glyoxylate. Its pathway is nitrogen metabolism; (S)-allantoin degradation. In terms of biological role, catalyzes the catabolism of the allantoin degradation intermediate (S)-ureidoglycolate, generating urea and glyoxylate. Involved in the anaerobic utilization of allantoin as sole nitrogen source. Reinforces the induction of genes involved in the degradation of allantoin and glyoxylate by producing glyoxylate. In Escherichia coli (strain SMS-3-5 / SECEC), this protein is Ureidoglycolate lyase.